The following is a 367-amino-acid chain: Protein RecA (367 aa).

73 to 80 (GPESSGKT) is an ATP binding site. Residues 345-367 (DEPVAKKASAKESKEAKELKEVE) are disordered.

This sequence belongs to the RecA family.

It localises to the cytoplasm. Functionally, can catalyze the hydrolysis of ATP in the presence of single-stranded DNA, the ATP-dependent uptake of single-stranded DNA by duplex DNA, and the ATP-dependent hybridization of homologous single-stranded DNAs. It interacts with LexA causing its activation and leading to its autocatalytic cleavage. This Herminiimonas arsenicoxydans protein is Protein RecA.